The following is a 395-amino-acid chain: FAD-dependent monooxygenase cctM (395 aa).

The first 23 residues, 1 to 23 (MEPGTDVRRVLVIGAGAAGLLIA), serve as a signal peptide directing secretion. Glu-37, Gly-52, and Arg-112 together coordinate FAD. Asn-138 and Asn-298 each carry an N-linked (GlcNAc...) asparagine glycan. Asp-306 is a binding site for FAD.

It belongs to the paxM FAD-dependent monooxygenase family. It depends on FAD as a cofactor.

It functions in the pathway mycotoxin biosynthesis. FAD-dependent monooxygenase; part of the gene cluster that mediates the biosynthesis of the mycotoxin cyclochlorotine, a hepatotoxic and carcinogenic cyclic chlorinated pentapeptide. The function of cctM within the pathway, if any, remains undetermined. The NRPS cctN initially catalyzes the condensation of L-serine (Ser), Pro, L-2-aminobutyrate (2Abu), Ser, and beta-Phe in this order to produce isocyclotine. After the dichlorination of Pro2 catalyzed by cctP2 to produce isocyclochlorotine, the cctO-mediated transacylation of isocyclochlorotine can furnish cyclochlorotine. The subsequent hydroxylation of cyclochlorotine by cctR yields hydroxycyclochlorotine as the final product. CctP1 probably acts as a phenylalanine aminomutase and provides the uncommon building block beta-Phe. Furthermore, 2Abu can be synthesized from threonine by one of the threonine dehydratases and transaminases localized outside of the cluster. The functions of the remaining proteins encoded by the cluster, cctM and cctT, have not been identified yet. In Talaromyces islandicus (Penicillium islandicum), this protein is FAD-dependent monooxygenase cctM.